The chain runs to 155 residues: SsrA-binding protein (155 aa).

Belongs to the SmpB family.

It is found in the cytoplasm. Its function is as follows. Required for rescue of stalled ribosomes mediated by trans-translation. Binds to transfer-messenger RNA (tmRNA), required for stable association of tmRNA with ribosomes. tmRNA and SmpB together mimic tRNA shape, replacing the anticodon stem-loop with SmpB. tmRNA is encoded by the ssrA gene; the 2 termini fold to resemble tRNA(Ala) and it encodes a 'tag peptide', a short internal open reading frame. During trans-translation Ala-aminoacylated tmRNA acts like a tRNA, entering the A-site of stalled ribosomes, displacing the stalled mRNA. The ribosome then switches to translate the ORF on the tmRNA; the nascent peptide is terminated with the 'tag peptide' encoded by the tmRNA and targeted for degradation. The ribosome is freed to recommence translation, which seems to be the essential function of trans-translation. The chain is SsrA-binding protein from Halothermothrix orenii (strain H 168 / OCM 544 / DSM 9562).